The sequence spans 298 residues: MDNAGKEREAVQLMAEAEKRVKASHSFLRGLFGGNTRIEEACEMYTRAANMFKMAKNWSAAGNAFCQAAKLHMQLQSKHDSATSFVDAGNAYKKADPQEAINCLNAAIDIYTDMGRFTIAAKHHITIAEIYETELVDIEKAIAHYEQSADYYKGEESNSSANKCLLKVAAYAAQLEQYQKAIEIYEQVGANTMDNPLLKYSAKDYFFKAALCHFIVDELNAKLALEKYEEMFPAFTDSRECKLLKKLLEAHEEQNSEAYTEAVKEFDSISRLDQWLTTMLLRIKKSIQGDGEGDGDLK.

The protein belongs to the SNAP family. In terms of assembly, interacts with PRKCABP, and disrupts the interaction between GRIA2 and PRKCABP, leading to the internalization of GRIA2.

The protein resides in the membrane. Its function is as follows. Required for vesicular transport between the endoplasmic reticulum and the Golgi apparatus. The sequence is that of Beta-soluble NSF attachment protein (NAPB) from Homo sapiens (Human).